We begin with the raw amino-acid sequence, 388 residues long: 3-dehydroquinate synthase (388 aa).

It belongs to the archaeal-type DHQ synthase family.

The enzyme catalyses 2-amino-2,3,7-trideoxy-D-lyxo-hept-6-ulosonate + NAD(+) + H2O = 3-dehydroquinate + NH4(+) + NADH + H(+). Functionally, catalyzes the oxidative deamination and cyclization of 2-amino-3,7-dideoxy-D-threo-hept-6-ulosonic acid (ADH) to yield 3-dehydroquinate (DHQ), which is fed into the canonical shikimic pathway of aromatic amino acid biosynthesis. The sequence is that of 3-dehydroquinate synthase from Haloarcula marismortui (strain ATCC 43049 / DSM 3752 / JCM 8966 / VKM B-1809) (Halobacterium marismortui).